The chain runs to 304 residues: Nucleotide-binding protein ROP_69550 (304 aa).

24 to 31 is an ATP binding site; sequence GLSGAGLQ. GTP is bound at residue 75-78; the sequence is DVRS.

It belongs to the RapZ-like family.

Displays ATPase and GTPase activities. The polypeptide is Nucleotide-binding protein ROP_69550 (Rhodococcus opacus (strain B4)).